We begin with the raw amino-acid sequence, 110 residues long: Phosphoribosyl-AMP cyclohydrolase (110 aa).

Aspartate 80 is a binding site for Mg(2+). Position 81 (cysteine 81) interacts with Zn(2+). Mg(2+)-binding residues include aspartate 82 and aspartate 84. Cysteine 97 and cysteine 104 together coordinate Zn(2+).

The protein belongs to the PRA-CH family. Homodimer. Mg(2+) serves as cofactor. The cofactor is Zn(2+).

The protein resides in the cytoplasm. It carries out the reaction 1-(5-phospho-beta-D-ribosyl)-5'-AMP + H2O = 1-(5-phospho-beta-D-ribosyl)-5-[(5-phospho-beta-D-ribosylamino)methylideneamino]imidazole-4-carboxamide. Its pathway is amino-acid biosynthesis; L-histidine biosynthesis; L-histidine from 5-phospho-alpha-D-ribose 1-diphosphate: step 3/9. Functionally, catalyzes the hydrolysis of the adenine ring of phosphoribosyl-AMP. The chain is Phosphoribosyl-AMP cyclohydrolase from Clostridium botulinum (strain 657 / Type Ba4).